The following is a 444-amino-acid chain: Putative permease IIC component YwbA (444 aa).

Positions 8 to 421 (MEEKIMPVAG…LITCAIYYPF (414 aa)) constitute a PTS EIIC type-3 domain. A run of 10 helical transmembrane segments spans residues 31–51 (GIILTMPLIIIGSVFLILTSL), 72–92 (LGYPVNASFDIMAMIAAFGIA), 104–124 (LSAGAISIAAFLLATPFEVPF), 138–158 (GIPITLLGSKGLFVAMLIALF), 187–207 (FVALIPGFIIVLLVWLARLLI), 223–243 (LGTPLSILGGSLGGSLIAEFV), 246–266 (LLWSCGIHGASIIGGIMAPIW), 291–311 (FFQIWINVGGSGATLALVLTM), 349–371 (PLLIVPFIIAPLLTITATYIGMS), and 402–422 (SGAVMQLVNLLITCAIYYPFF).

Its subcellular location is the cell membrane. In terms of biological role, the phosphoenolpyruvate-dependent sugar phosphotransferase system (PTS), a major carbohydrate active -transport system, catalyzes the phosphorylation of incoming sugar substrates concomitant with their translocation across the cell membrane. The polypeptide is Putative permease IIC component YwbA (ywbA) (Bacillus subtilis (strain 168)).